The chain runs to 130 residues: Small ribosomal subunit protein uS11c (130 aa).

Belongs to the universal ribosomal protein uS11 family. As to quaternary structure, part of the 30S ribosomal subunit.

Its subcellular location is the plastid. The protein localises to the chloroplast. This chain is Small ribosomal subunit protein uS11c, found in Angiopteris evecta (Mule's foot fern).